Here is a 460-residue protein sequence, read N- to C-terminus: ATP synthase subunit beta (460 aa).

149–156 serves as a coordination point for ATP; that stretch reads GGAGVGKT.

It belongs to the ATPase alpha/beta chains family. F-type ATPases have 2 components, CF(1) - the catalytic core - and CF(0) - the membrane proton channel. CF(1) has five subunits: alpha(3), beta(3), gamma(1), delta(1), epsilon(1). CF(0) has three main subunits: a(1), b(2) and c(9-12). The alpha and beta chains form an alternating ring which encloses part of the gamma chain. CF(1) is attached to CF(0) by a central stalk formed by the gamma and epsilon chains, while a peripheral stalk is formed by the delta and b chains.

It is found in the cell membrane. The enzyme catalyses ATP + H2O + 4 H(+)(in) = ADP + phosphate + 5 H(+)(out). In terms of biological role, produces ATP from ADP in the presence of a proton gradient across the membrane. The catalytic sites are hosted primarily by the beta subunits. This is ATP synthase subunit beta from Acholeplasma laidlawii (strain PG-8A).